The sequence spans 498 residues: Acetyl-coenzyme A carboxylase carboxyl transferase subunit beta, chloroplastic (498 aa).

The CoA carboxyltransferase N-terminal domain occupies 228-498 (LWVQCEICYG…LNHNLSRTLT (271 aa)). Residues Cys-232, Cys-235, Cys-251, and Cys-254 each coordinate Zn(2+). The C4-type zinc finger occupies 232–254 (CEICYGLNYKKFFKSKMNICEQC).

It belongs to the AccD/PCCB family. As to quaternary structure, acetyl-CoA carboxylase is a heterohexamer composed of biotin carboxyl carrier protein, biotin carboxylase and 2 subunits each of ACCase subunit alpha and ACCase plastid-coded subunit beta (accD). Zn(2+) serves as cofactor.

It is found in the plastid. The protein resides in the chloroplast stroma. It carries out the reaction N(6)-carboxybiotinyl-L-lysyl-[protein] + acetyl-CoA = N(6)-biotinyl-L-lysyl-[protein] + malonyl-CoA. It functions in the pathway lipid metabolism; malonyl-CoA biosynthesis; malonyl-CoA from acetyl-CoA: step 1/1. In terms of biological role, component of the acetyl coenzyme A carboxylase (ACC) complex. Biotin carboxylase (BC) catalyzes the carboxylation of biotin on its carrier protein (BCCP) and then the CO(2) group is transferred by the transcarboxylase to acetyl-CoA to form malonyl-CoA. The polypeptide is Acetyl-coenzyme A carboxylase carboxyl transferase subunit beta, chloroplastic (Populus alba (White poplar)).